Reading from the N-terminus, the 273-residue chain is NAD-dependent protein deacylase (273 aa).

A Deacetylase sirtuin-type domain is found at 20–272 (RERLRQRIFF…PEFVDKFLKG (253 aa)). NAD(+) is bound at residue 48 to 67 (GAGISAESGIRTFRAADGLW). Substrate is bound by residues tyrosine 92 and arginine 95. 129–132 (QNID) serves as a coordination point for NAD(+). Histidine 147 acts as the Proton acceptor in catalysis. Residues cysteine 155 and cysteine 174 each contribute to the Zn(2+) site. Residues 214–216 (GTS), 240–242 (NLE), and alanine 258 each bind NAD(+).

The protein belongs to the sirtuin family. Class III subfamily. It depends on Zn(2+) as a cofactor.

The protein resides in the cytoplasm. The enzyme catalyses N(6)-acetyl-L-lysyl-[protein] + NAD(+) + H2O = 2''-O-acetyl-ADP-D-ribose + nicotinamide + L-lysyl-[protein]. The catalysed reaction is N(6)-succinyl-L-lysyl-[protein] + NAD(+) + H2O = 2''-O-succinyl-ADP-D-ribose + nicotinamide + L-lysyl-[protein]. It catalyses the reaction N(6)-(2-hydroxyisobutanoyl)-L-lysyl-[protein] + NAD(+) + H2O = 2''-O-(2-hydroxyisobutanoyl)-ADP-D-ribose + nicotinamide + L-lysyl-[protein]. Functionally, NAD-dependent lysine deacetylase that specifically removes acetyl groups on target proteins. Also acts as a protein-lysine deacylase by mediating protein desuccinylation and de-2-hydroxyisobutyrylation. Modulates the activities of several proteins which are inactive in their acylated form. This is NAD-dependent protein deacylase from Salmonella typhi.